We begin with the raw amino-acid sequence, 282 residues long: Pantothenate synthetase (282 aa).

30-37 (MGNLHEGH) serves as a coordination point for ATP. The active-site Proton donor is His-37. (R)-pantoate is bound at residue Gln-61. Gln-61 serves as a coordination point for beta-alanine. 149–152 (GEKD) is an ATP binding site. Gln-155 provides a ligand contact to (R)-pantoate. ATP is bound by residues Val-178 and 186–189 (KSSR).

The protein belongs to the pantothenate synthetase family. As to quaternary structure, homodimer.

The protein localises to the cytoplasm. It catalyses the reaction (R)-pantoate + beta-alanine + ATP = (R)-pantothenate + AMP + diphosphate + H(+). It participates in cofactor biosynthesis; (R)-pantothenate biosynthesis; (R)-pantothenate from (R)-pantoate and beta-alanine: step 1/1. Its function is as follows. Catalyzes the condensation of pantoate with beta-alanine in an ATP-dependent reaction via a pantoyl-adenylate intermediate. The protein is Pantothenate synthetase of Marinobacter nauticus (strain ATCC 700491 / DSM 11845 / VT8) (Marinobacter aquaeolei).